We begin with the raw amino-acid sequence, 1473 residues long: G8 domain-containing protein DDB_G0286311 (1473 aa).

The N-terminal stretch at Met1–Ser21 is a signal peptide. The chain crosses the membrane as a helical span at residues Ile105 to Phe125. A glycan (N-linked (GlcNAc...) asparagine) is linked at Asn126. Residues Thr130–Leu150 traverse the membrane as a helical segment. N-linked (GlcNAc...) asparagine glycans are attached at residues Asn203, Asn241, and Asn275. Residues Thr298–Thr375 show a composition bias toward low complexity. The segment at Thr298 to Ser400 is disordered. The segment covering Asp376–Ala389 has biased composition (polar residues). Low complexity predominate over residues Ser390–Ser400. 10 N-linked (GlcNAc...) asparagine glycosylation sites follow: Asn444, Asn637, Asn680, Asn1078, Asn1088, Asn1176, Asn1206, Asn1225, Asn1389, and Asn1424. Residues Ser626–Thr754 form the G8 domain.

The protein belongs to the comF family.

It localises to the membrane. The polypeptide is G8 domain-containing protein DDB_G0286311 (Dictyostelium discoideum (Social amoeba)).